The sequence spans 300 residues: Mitochondrial carnitine/acylcarnitine carrier-like protein (300 aa).

Solcar repeat units follow at residues 2–93 (ADAW…MEGL), 102–201 (LTIS…FKRF), and 211–298 (LGQG…TRSS). 6 consecutive transmembrane segments (helical) span residues 8-28 (LASG…FDTI), 64-84 (GLYK…AVLF), 108-128 (FVAG…TELI), 176-195 (GLFP…FAAY), 211-231 (LGQG…WGIV), and 273-292 (GFGP…FLAY).

The protein belongs to the mitochondrial carrier (TC 2.A.29) family. High expression in cotyledons, leaves, flowers and developing siliques. Lower expression in roots and maturing siliques. Not detected in meristematic tissues.

The protein resides in the mitochondrion inner membrane. Involved in photorespiratory metabolism. Acts probably as a carrier for a glycine decarboxylase (GDC) cofactor or, alternatively, may act as a mitochondrial glycine shuttle. Involved in the transition from the embryonic stage to the juvenile autotrophic stage. This chain is Mitochondrial carnitine/acylcarnitine carrier-like protein (BOU), found in Arabidopsis thaliana (Mouse-ear cress).